The following is an 864-amino-acid chain: Mitochondrial 15S rRNA processing factor CCM1 (864 aa).

The N-terminal 76 residues, methionine 1–arginine 76, are a transit peptide targeting the mitochondrion. 2 PPR repeats span residues asparagine 319–histidine 353 and aspartate 356–proline 390.

Belongs to the CCM1 family. In terms of assembly, binds to mitochondrial small subunit 15S rRNA.

Its subcellular location is the mitochondrion. Regulates mitochondrial small subunit maturation by controlling 15S rRNA 5'-end processing. Localizes to the 5' precursor of the 15S rRNA in a position that is subsequently occupied by mS47 in the mature yeast mtSSU. Uses structure and sequence-specific RNA recognition, binding to a single-stranded region of the precursor and specifically recognizing bases -6 to -1. The exchange of Ccm1 for mS47 is coupled to the irreversible removal of precursor rRNA that is accompanied by conformational changes of the mitoribosomal proteins uS5m and mS26. These conformational changes signal completion of 5'-end rRNA processing through protection of the mature 5'-end of the 15S rRNA and stabilization of mS47. The removal of the 5' precursor together with the dissociation of Ccm1 may be catalyzed by the 5'-3' exoribonuclease Pet127. Involved in the specific removal of group I introns in mitochondrial encoded transcripts. The protein is Mitochondrial 15S rRNA processing factor CCM1 (CCM1) of Saccharomyces cerevisiae (strain YJM789) (Baker's yeast).